A 572-amino-acid polypeptide reads, in one-letter code: MAKPFFRLQKFLRRTQFLLLFLTAAYLMTGSLLLLQRARVALPQALRAPGSLQALPVATVALGVGLLDGRSLRDPHSSPDLLLDVDTLRSPLARLPPGIRWPRRNRSSLRRRWLHHLTSDPQGPPTLSPEASGPANHNRGNYLGCFSEEGQERTLKGAVFYDLRKMTVSHCQDACAERSYVYAGLEAGAECYCGNRLPATRVSLKECNQECKGEKGSMCGAVRRLSVYSVGLQQPGSKKRRTATYRGCFPLPENVTHTFSSSMTQANMTVETCSGFCSQKEFPLAILRGWDCYCAYPTPQFSLRDAVDGALCSQAPETQGLPGYCEVYQTPVQDTRCTDRKFLPDKSKVFVALSSFPGAGNTWARHLIEHATGFYTGSYYFDGTLYNKGFKGEKDHWRSRRTICVKTHESGRREIEMFDSAILLIRNPYRSLVAEFNRKCAGHLGYAPDRNWKSKEWPEFVNSYASWWSSHVLDWLKYGKRLLVVHYEELRHSLVPTLREMVAFLNVSVSEERLLCVENNKEGSFRRRGRRPHDQEPFTPEMKDLINGYIRTVDQALRDHNWAGLPREYVPR.

Residues 1–14 are Cytoplasmic-facing; sequence MAKPFFRLQKFLRR. The chain crosses the membrane as a helical; Signal-anchor for type II membrane protein span at residues 15–35; sequence TQFLLLFLTAAYLMTGSLLLL. Topologically, residues 36–572 are extracellular; that stretch reads QRARVALPQA…AGLPREYVPR (537 aa). An N-linked (GlcNAc...) asparagine glycan is attached at N105. 2 WSC domains span residues 139 to 231 and 242 to 337; these read RGNY…YSVG and TATY…DTRC. N254 is a glycosylation site (N-linked (GlcNAc...) asparagine).

The protein belongs to the WSCD family.

The protein resides in the golgi apparatus membrane. The catalysed reaction is a ganglioside GM1b + 3'-phosphoadenylyl sulfate = an 8-O-sulfo-ganglioside GM1b + adenosine 3',5'-bisphosphate + H(+). Sialate:O-sulfotransferase which catalyzes 8-O-sulfation at the Sia-glycan level using 3'-phosphoadenosine 5'-phosphosulfate (PAPS) as a donor, forming 8-O-sulfated Sia (Sia8S)-glycans. Displays selectivity toward glycolipids such as GM1 gangliosides. The chain is Sialate:O-sulfotransferase 1 (Wscd1) from Mus musculus (Mouse).